The chain runs to 147 residues: uncharacterized protein (147 aa).

4Fe-4S ferredoxin-type domains lie at 80-109 (WYPK…AENG) and 110-141 (KVVV…FPDE). [4Fe-4S] cluster contacts are provided by Cys89, Cys92, Cys95, Cys99, Cys119, Cys123, Cys126, and Cys130.

[4Fe-4S] cluster is required as a cofactor.

This is an uncharacterized protein from Methanocaldococcus jannaschii (strain ATCC 43067 / DSM 2661 / JAL-1 / JCM 10045 / NBRC 100440) (Methanococcus jannaschii).